We begin with the raw amino-acid sequence, 186 residues long: Hydra actinoporin-like toxin 5 (186 aa).

Positions 1–20 (MLLYVCLVNLLLQSPSGVDS) are cleaved as a signal peptide. The short motif at 158 to 160 (RDG) is the Cell attachment site element.

Belongs to the actinoporin family. HALT subfamily. In terms of assembly, octamer or nonamer in membranes. Monomer in the soluble state. In vitro, interacts with folate receptor alpha (of target organism).

Its subcellular location is the nematocyst. It localises to the secreted. It is found in the target cell membrane. Functionally, pore-forming protein that forms hydrophilic pores and causes cytolysis. Compared to equinatoxin-2 (AC P61914), it reveals lower cytolysis activity (5-12-fold difference, tested on erythrocytes), a larger pore size (probably 2-3 nm) and different affinity to membrane lipids (100-fold lower affinity to sphingomyelin). Binds to sulfatides (SFT) as well as to the two sphingolipids, lysophosphatidic acid (LPA) and sphingosine-1-phosphate (S1P). It seems to bind more strongly to LPA than to S1P and SFT. Shows cytolytic activity on HeLa cells, with a different potency than its paralogs (from most potent to less potent: HALT-4&gt;HALT-6~HALT-1&gt;HALT-3&gt;HALT-7&gt;HALT-2). Pore formation is a multi-step process that involves specific recognition of membrane lipid by a protein aromatic residues rich region, firm binding to the membrane (mainly driven by hydrophobic interactions) accompanied by the transfer of the N-terminal region to the lipid-water interface and finally pore formation after oligomerization of monomers. In vitro, binds to the folate receptor alpha (FOLR1), a GPI-anchored membrane protein that plays a major role in the uptake of folate/folic acid into cells via endocytosis, suggesting a possible involvement of this receptor in the mechanism of HALT-1-induced cell lysis. In vivo, does not cause visible paralysis in larvae of the blowfly Sarcophaga faculata, the most common arthropod prey of Hydra. In Hydra vulgaris (Hydra), this protein is Hydra actinoporin-like toxin 5.